An 80-amino-acid chain; its full sequence is MKTTILILLILGLGINAKSLEERKSEEEKLFKLLGKIIHHVGNFVHGFSHVFGDDQQDNGKFYGYYAEDNGKHWYDTGDQ.

The signal sequence occupies residues 1–19; that stretch reads MKTTILILLILGLGINAKS. A propeptide spanning residues 20–29 is cleaved from the precursor; sequence LEERKSEEEK. Residue Phe52 is modified to Phenylalanine amide. Positions 54–80 are excised as a propeptide; the sequence is DDQQDNGKFYGYYAEDNGKHWYDTGDQ.

The protein localises to the secreted. Has antimicrobial activity. In Styela clava (Sea squirt), this protein is Clavanin-E.